The following is a 619-amino-acid chain: Pentatricopeptide repeat-containing protein At3g22470, mitochondrial (619 aa).

The transit peptide at 1 to 28 directs the protein to the mitochondrion; it reads MIQRLIPLNRKASNFTQILEKGTSLLHY. PPR repeat units lie at residues 69-103, 104-138, 139-173, 174-208, 209-243, 244-278, 279-313, 314-348, 349-383, 384-418, 419-453, 454-488, 489-523, 524-558, and 559-593; these read TPID…GIEH, DMYT…GYEP, DTIT…KQRP, DLVT…GFQP, DEVT…NIKA, SVVQ…GIKA, DVVT…NIIP, DVVT…GIAP, DTIT…GCEP, DIVT…GLIP, NTIT…GVPP, SVVT…RMTL, GIGI…GVKP, DVVT…GCTP, and DDFT…GFSA.

Belongs to the PPR family. P subfamily.

It is found in the mitochondrion. In Arabidopsis thaliana (Mouse-ear cress), this protein is Pentatricopeptide repeat-containing protein At3g22470, mitochondrial.